The sequence spans 281 residues: Elongation factor 1-delta (281 aa).

Ala2 is subject to N-acetylalanine. Lys17 carries the N6-acetyllysine modification. Residues Ser37, Glu40, Ser44, and Ser60 each carry the phosphoserine modification. Residue Thr73 is modified to Phosphothreonine. Residues 80–115 (LVVRIASLEVENQSLRGVVQELQQAISKLEARLNVL) form a leucine-zipper region. 4 positions are modified to phosphoserine: Ser86, Asn91, Leu94, and Ser106. An N6-acetyllysine modification is found at Lys107. Lys117 carries the N6-acetyllysine; alternate modification. Lys117 carries the N6-succinyllysine; alternate modification. The segment at 118–172 (SSPGHRATAPQTQHVSPMRQVEPPAKKPATPAEDDEDDDIDLFGSDNEEEDKEAA) is disordered. Ser119 bears the Phosphoserine mark. Residue Thr129 is modified to Phosphothreonine. Phosphoserine is present on Ser133. Thr147 carries the post-translational modification Phosphothreonine. Positions 149–169 (AEDDEDDDIDLFGSDNEEEDK) are enriched in acidic residues. Position 162 is a phosphoserine; by CK2 (Ser162). A catalytic (GEF) region spans residues 173–281 (QLREERLRQY…SVDIAAFNKI (109 aa)).

Belongs to the EF-1-beta/EF-1-delta family. As to quaternary structure, EF-1 is composed of 4 subunits: alpha, beta, delta isoform 1, and gamma. Isoform 2 interacts with HSF1 and NFE2L2. In terms of tissue distribution, isoform 2 is specifically expressed in brain, cerebellum and testis.

It is found in the nucleus. In terms of biological role, EF-1-beta and EF-1-delta stimulate the exchange of GDP bound to EF-1-alpha to GTP, regenerating EF-1-alpha for another round of transfer of aminoacyl-tRNAs to the ribosome. Its function is as follows. Regulates induction of heat-shock-responsive genes through association with heat shock transcription factors and direct DNA-binding at heat shock promoter elements (HSE). This is Elongation factor 1-delta (EEF1D) from Homo sapiens (Human).